The sequence spans 1198 residues: Sterol 3-beta-glucosyltransferase (1198 aa).

A compositionally biased stretch (polar residues) spans 1 to 11; that stretch reads MPITQIISASD. Disordered regions lie at residues 1–89 and 124–162; these read MPIT…DNAD and SQVD…PEVP. Over residues 35 to 51 the composition is skewed to basic residues; that stretch reads RHHRLSRSLSKFKRWRG. A compositionally biased stretch (low complexity) spans 52–67; it reads RSNSSLSMGSSEQQEL. Ser-76 bears the Phosphoserine mark. A compositionally biased stretch (basic and acidic residues) spans 146 to 162; the sequence is VKSKKENLKTKSHPEVP. A GRAM 1 domain is found at 187–236; that stretch reads AKLRQRFCLDEQEPFLNDFPAWLLKDVLVQGHIFITTKHFLFFAYLPKNP. Positions 238-336 constitute a PH domain; the sequence is SVKMSGNLNI…WVNALKKEQF (99 aa). The interval 427–465 is disordered; that stretch reads KSSFGKETPATAEQKNNGEDSKYLNVPTSAVPSSENGKK. A compositionally biased stretch (polar residues) spans 452–461; it reads VPTSAVPSSE. The GRAM 2 domain occupies 570–636; that stretch reads ERFRYHFKFN…VDVETCYKEK (67 aa). At Ser-693 the chain carries Phosphoserine. 13 residues coordinate UDP-alpha-D-glucose: Ser-749, Arg-750, Asp-752, Asn-1025, Asn-1053, Val-1054, His-1056, His-1069, Ser-1072, Gly-1073, Thr-1074, Asp-1093, and Gln-1094.

It belongs to the glycosyltransferase 28 family.

Its subcellular location is the cytoplasm. The protein localises to the membrane. It catalyses the reaction a sterol + UDP-alpha-D-glucose = a sterol 3-beta-D-glucoside + UDP + H(+). It carries out the reaction ergosterol + UDP-alpha-D-glucose = ergosteryl 3-beta-D-glucoside + UDP + H(+). Its function is as follows. Sterol glycosyltransferase responsible for the glycosylation of ergosterol to form ergosterol-glucoside. Also shows activity in vitro on other sterols such as cholesterol, beta-sitosterol, stigmasterol and tomatidine. In contrasts to what is observed in Pichia pastoris and Aspergillus oryzae, is not involved in cytoplasm to vacuole transport (Cvt), pexophagy or nonselective autophagy in Saccharomyces cerevisiae. The sequence is that of Sterol 3-beta-glucosyltransferase from Saccharomyces cerevisiae (strain YJM789) (Baker's yeast).